The following is a 161-amino-acid chain: Large ribosomal subunit protein uL10 (161 aa).

It belongs to the universal ribosomal protein uL10 family. In terms of assembly, part of the ribosomal stalk of the 50S ribosomal subunit. The N-terminus interacts with L11 and the large rRNA to form the base of the stalk. The C-terminus forms an elongated spine to which L12 dimers bind in a sequential fashion forming a multimeric L10(L12)X complex.

Forms part of the ribosomal stalk, playing a central role in the interaction of the ribosome with GTP-bound translation factors. The polypeptide is Large ribosomal subunit protein uL10 (Buchnera aphidicola subsp. Cinara cedri (strain Cc)).